The primary structure comprises 311 residues: Cytosolic Fe-S cluster assembly factor Nubp1 homolog (311 aa).

The [4Fe-4S] cluster site is built by Cys9, Cys23, Cys26, and Cys32. ATP is bound at residue 63–70 (GKGGVGKS). Residues Cys241 and Cys244 each contribute to the [4Fe-4S] cluster site.

This sequence belongs to the Mrp/NBP35 ATP-binding proteins family. NUBP1/NBP35 subfamily. In terms of assembly, heterotetramer of 2 Nubp1 and 2 Nubp2 chains. Requires [4Fe-4S] cluster as cofactor.

The protein localises to the cytoplasm. Its function is as follows. Component of the cytosolic iron-sulfur (Fe/S) protein assembly (CIA) machinery. Required for maturation of extramitochondrial Fe-S proteins. The Nubp1-Nubp2 heterotetramer forms a Fe-S scaffold complex, mediating the de novo assembly of an Fe-S cluster and its transfer to target apoproteins. The protein is Cytosolic Fe-S cluster assembly factor Nubp1 homolog of Drosophila grimshawi (Hawaiian fruit fly).